A 260-amino-acid polypeptide reads, in one-letter code: Hydroxyethylthiazole kinase 1 (260 aa).

Met39 serves as a coordination point for substrate. 2 residues coordinate ATP: Arg115 and Thr160. Gly187 provides a ligand contact to substrate.

It belongs to the Thz kinase family. The cofactor is Mg(2+).

It catalyses the reaction 5-(2-hydroxyethyl)-4-methylthiazole + ATP = 4-methyl-5-(2-phosphooxyethyl)-thiazole + ADP + H(+). It participates in cofactor biosynthesis; thiamine diphosphate biosynthesis; 4-methyl-5-(2-phosphoethyl)-thiazole from 5-(2-hydroxyethyl)-4-methylthiazole: step 1/1. Catalyzes the phosphorylation of the hydroxyl group of 4-methyl-5-beta-hydroxyethylthiazole (THZ). The sequence is that of Hydroxyethylthiazole kinase 1 from Streptococcus pneumoniae serotype 19F (strain G54).